Consider the following 330-residue polypeptide: Malate dehydrogenase (330 aa).

An NAD(+)-binding site is contributed by 15–21; that stretch reads GAGGQIG. Substrate is bound by residues arginine 95 and arginine 101. NAD(+) is bound by residues asparagine 108, glutamine 115, and 132-134; that span reads VGN. Positions 134 and 165 each coordinate substrate. Residue histidine 190 is the Proton acceptor of the active site.

The protein belongs to the LDH/MDH superfamily. MDH type 2 family.

The catalysed reaction is (S)-malate + NAD(+) = oxaloacetate + NADH + H(+). Its function is as follows. Catalyzes the reversible oxidation of malate to oxaloacetate. The sequence is that of Malate dehydrogenase from Corynebacterium jeikeium (strain K411).